The primary structure comprises 352 residues: NADP-dependent isopropanol dehydrogenase (352 aa).

Zn(2+) contacts are provided by Cys-37, His-59, and Asp-150. Residues 175 to 178 (IGPV), 198 to 200 (GSR), Tyr-218, 265 to 267 (VNY), and Lys-340 each bind NADP(+).

This sequence belongs to the zinc-containing alcohol dehydrogenase family. Homotetramer. Zn(2+) is required as a cofactor.

It catalyses the reaction propan-2-ol + NADP(+) = acetone + NADPH + H(+). In terms of biological role, alcohol dehydrogenase with a preference for medium chain secondary alcohols, such as 2-butanol and isopropanol. Has very low activity with primary alcohols, such as ethanol. Under physiological conditions, the enzyme reduces aldehydes and 2-ketones to produce secondary alcohols. Is also active with acetaldehyde and propionaldehyde. The protein is NADP-dependent isopropanol dehydrogenase (adh) of Thermoanaerobacter brockii (Thermoanaerobium brockii).